A 138-amino-acid chain; its full sequence is Large ribosomal subunit protein bL19 (138 aa).

This sequence belongs to the bacterial ribosomal protein bL19 family.

Functionally, this protein is located at the 30S-50S ribosomal subunit interface and may play a role in the structure and function of the aminoacyl-tRNA binding site. The protein is Large ribosomal subunit protein bL19 of Leptospira interrogans serogroup Icterohaemorrhagiae serovar copenhageni (strain Fiocruz L1-130).